Consider the following 642-residue polypeptide: Myrosinase-binding protein 2 (642 aa).

Jacalin-type lectin domains lie at 2-151, 156-291, 334-477, and 490-633; these read SEKV…HFFA, LKHF…HFAP, PNKV…YFAP, and SKKL…HAVP. A compositionally biased stretch (pro residues) spans 296–334; it reads TPAPAPAPAPAPAPAPSPAPASAPVPAPAPTPAPAPAPP. Disordered regions lie at residues 296 to 338 and 479 to 499; these read TPAP…NKVE and TNST…RGGN. The span at 479-490 shows a compositional bias: low complexity; that stretch reads TNSTTPSTPSTS.

This sequence belongs to the jacalin lectin family. Expressed in flowers. Detected mainly in ovules and styles of immature flowers, but also in pistils, styles, stamens, petals and embryos. Not detected in leaves.

The protein is Myrosinase-binding protein 2 (F-ATMBP) of Arabidopsis thaliana (Mouse-ear cress).